Reading from the N-terminus, the 456-residue chain is Ezy-1 protein (456 aa).

The N-terminal stretch at 1 to 28 (MQLSSSLRSARSAAASSGCALASRPVVA) is a signal peptide. 3 disordered regions span residues 167-189 (SDGG…DGDG), 273-310 (FTGK…GGSG), and 414-456 (QPAG…SPNM). The span at 281–293 (AEGDDGEDEEEGE) shows a compositional bias: acidic residues. The span at 418-428 (DGHEPEPKRPE) shows a compositional bias: basic and acidic residues.

This Chlamydomonas reinhardtii (Chlamydomonas smithii) protein is Ezy-1 protein (Ezy-1).